The following is a 299-amino-acid chain: tRNA dimethylallyltransferase (299 aa).

ATP is bound at residue G13–T20. T15–T20 contacts substrate. The segment at D38 to Q41 is interaction with substrate tRNA.

It belongs to the IPP transferase family. In terms of assembly, monomer. It depends on Mg(2+) as a cofactor.

The enzyme catalyses adenosine(37) in tRNA + dimethylallyl diphosphate = N(6)-dimethylallyladenosine(37) in tRNA + diphosphate. Catalyzes the transfer of a dimethylallyl group onto the adenine at position 37 in tRNAs that read codons beginning with uridine, leading to the formation of N6-(dimethylallyl)adenosine (i(6)A). The sequence is that of tRNA dimethylallyltransferase from Parasynechococcus marenigrum (strain WH8102).